The primary structure comprises 209 residues: MGKFTVLNHPLIQHKLTLIRDKHAGTKEFREIANEIAELMVYEITRDLPLESIEIETPMGKTIQKQLAGKKLAVVPILRAGLGMVDGVLRLIPAAKVGHIGMYRDEKTLKPHEYFVKMPPDIEQRDLIIVDPMLATGGSANMAIEALKKRGATSMRLVVLVAAPEGVKAVQAANPDVDIYAAALDDHLNENGYIVPGLGDAGDRLFGTK.

Residues R79, R104, and 131 to 139 (DPMLATGGS) contribute to the 5-phospho-alpha-D-ribose 1-diphosphate site. Uracil contacts are provided by residues I194 and 199-201 (GDA). D200 provides a ligand contact to 5-phospho-alpha-D-ribose 1-diphosphate.

Belongs to the UPRTase family. It depends on Mg(2+) as a cofactor.

The catalysed reaction is UMP + diphosphate = 5-phospho-alpha-D-ribose 1-diphosphate + uracil. Its pathway is pyrimidine metabolism; UMP biosynthesis via salvage pathway; UMP from uracil: step 1/1. With respect to regulation, allosterically activated by GTP. Its function is as follows. Catalyzes the conversion of uracil and 5-phospho-alpha-D-ribose 1-diphosphate (PRPP) to UMP and diphosphate. The chain is Uracil phosphoribosyltransferase from Lacticaseibacillus paracasei (strain ATCC 334 / BCRC 17002 / CCUG 31169 / CIP 107868 / KCTC 3260 / NRRL B-441) (Lactobacillus paracasei).